Reading from the N-terminus, the 64-residue chain is Beta-toxin Tf1 (64 aa).

The 62-residue stretch at 1–62 (KEGYLMDHEG…VWERATNRCG (62 aa)) folds into the LCN-type CS-alpha/beta domain. Intrachain disulfides connect C11/C61, C15/C37, C23/C42, and C27/C44. Position 61 is a cysteine amide (C61).

This sequence belongs to the long (4 C-C) scorpion toxin superfamily. Sodium channel inhibitor family. Beta subfamily. In terms of tissue distribution, expressed by the venom gland.

It is found in the secreted. In terms of biological role, beta toxins bind voltage-independently at site-4 of sodium channels (Nav) and shift the voltage of activation toward more negative potentials thereby affecting sodium channel activation and promoting spontaneous and repetitive firing. The protein is Beta-toxin Tf1 of Tityus fasciolatus (Central Brazilian scorpion).